The chain runs to 443 residues: Methylenetetrahydrofolate--tRNA-(uracil-5-)-methyltransferase TrmFO (443 aa).

Position 8 to 13 (8 to 13) interacts with FAD; it reads GAGLAG.

This sequence belongs to the MnmG family. TrmFO subfamily. It depends on FAD as a cofactor.

It localises to the cytoplasm. The enzyme catalyses uridine(54) in tRNA + (6R)-5,10-methylene-5,6,7,8-tetrahydrofolate + NADH + H(+) = 5-methyluridine(54) in tRNA + (6S)-5,6,7,8-tetrahydrofolate + NAD(+). The catalysed reaction is uridine(54) in tRNA + (6R)-5,10-methylene-5,6,7,8-tetrahydrofolate + NADPH + H(+) = 5-methyluridine(54) in tRNA + (6S)-5,6,7,8-tetrahydrofolate + NADP(+). Catalyzes the folate-dependent formation of 5-methyl-uridine at position 54 (M-5-U54) in all tRNAs. The polypeptide is Methylenetetrahydrofolate--tRNA-(uracil-5-)-methyltransferase TrmFO (Thermus thermophilus (strain ATCC 27634 / DSM 579 / HB8)).